The following is a 702-amino-acid chain: Protein sepa-1 (702 aa).

Residues 39–160 (RQRFCYEKTD…KESTSYGQFR (122 aa)) form a required for self-association and interaction with pgl-3 region. 3 consecutive short sequence motifs (LIR) follow at residues 107 to 110 (FVEV), 247 to 250 (FQKI), and 298 to 301 (FGFV). Positions 450-471 (AKDPEEPTTAASEGGNTYGYQE) are disordered. Residues 458-468 (TAASEGGNTYG) show a composition bias toward polar residues. The LIR 4 motif lies at 469 to 472 (YQEL). A coiled-coil region spans residues 508 to 543 (AAMDKKKKRRELKSRLNKINAQIDELEKRRMERAGK). Residues 545–564 (QVVSSSVPSEEAAQVEAPAS) form a disordered region. One can recognise a KIX domain in the interval 597–674 (NTSKEWIVED…TVDQILKKTL (78 aa)). Residues 675-685 (KKDQRATEHNH) are compositionally biased toward basic and acidic residues. A disordered region spans residues 675 to 702 (KKDQRATEHNHQQPTQSSDELAKNHEKN).

In terms of assembly, self-associates. Interacts (via the LIR motifs) with lgg-1; the interaction is direct. Interacts (via the LIR motifs) with lgg-2; the interaction is direct. Interacts with pgl-3; interaction is enhanced in the presence of RNA. Interacts with epg-2; may be modulated by prmt-1. Degraded by autophagy.

The protein localises to the nucleus. Its subcellular location is the cytoplasm. It localises to the cytoplasmic granule. In terms of biological role, adapter protein that connects P-granules in somatic cells with the autophagic machinery. Association with other adapters such as epg-2 and P-granule components such as pgl-3 is required for the accumulation and degradation of P-granules by autophagy in somatic cells. This ensures exclusive localization of the P-granules in germ cells. In Caenorhabditis elegans, this protein is Protein sepa-1.